The chain runs to 108 residues: Histone H4 (108 aa).

Residues 1 to 24 (MTGRGKGGKVLSLGGKGGKGAKRH) are disordered. Residues 17 to 21 (GGKGA) mediate DNA binding.

This sequence belongs to the histone H4 family. The nucleosome is a histone octamer containing two molecules each of H2A, H2B, H3 and H4 assembled in one H3-H4 heterotetramer and two H2A-H2B heterodimers. The octamer wraps approximately 147 bp of DNA.

It is found in the nucleus. It localises to the chromosome. Functionally, core component of nucleosome. Nucleosomes wrap and compact DNA into chromatin, limiting DNA accessibility to the cellular machineries which require DNA as a template. Histones thereby play a central role in transcription regulation, DNA repair, DNA replication and chromosomal stability. DNA accessibility is regulated via a complex set of post-translational modifications of histones, also called histone code, and nucleosome remodeling. This chain is Histone H4, found in Mastigamoeba balamuthi (Phreatamoeba balamuthi).